Reading from the N-terminus, the 1187-residue chain is Myelin transcription factor 1-like protein (1187 aa).

Residues 1 to 22 (MDVDSEEKRHRTRSKGVRVPVE) form a disordered region. The CCHHC-type 1 zinc finger occupies 22–65 (EPAIQELFSCPTPGCDGSGHVSGKYARHRSVYGCPLAKKRKTQD). Residues Cys-31, Cys-36, His-49, and Cys-55 each contribute to the Zn(2+) site. Disordered stretches follow at residues 56 to 178 (PLAK…QMSC) and 221 to 248 (RTESEMNSNTSNSLEDDSDKNENLGRKS). The segment covering 89 to 172 (ECYESDGTED…EEEEEEEENE (84 aa)) has biased composition (acidic residues). Position 251 is a phosphoserine (Ser-251). Disordered stretches follow at residues 343 to 422 (SETN…DRSE) and 450 to 514 (REKM…GCDG). Residues 344–358 (ETNPQDRSQPPNMSV) show a composition bias toward polar residues. Composition is skewed to basic and acidic residues over residues 362-377 (VRQEDDFPGRTPDRSY), 401-412 (AKEDGCHERDDD), 450-488 (REKMAMDAGRRDNLRSYEDQSPRQLAGEDRKSKSSDSHV), and 496-506 (DPSRTEKRESK). 2 CCHHC-type zinc fingers span residues 498 to 541 (SRTE…PPEI) and 542 to 585 (LAMH…KLAK). The Zn(2+) site is built by Cys-507, Cys-512, His-525, Cys-531, Cys-551, Cys-556, His-569, and Cys-575. Positions 686 to 710 (ASPSSSTTSSYAPSSSSNLSCGGGS) are disordered. CCHHC-type zinc fingers lie at residues 897-940 (LATS…GIRI), 946-989 (DKED…QKDG), and 999-1042 (KSVK…MKKA). Residues Cys-906, Cys-911, His-924, Cys-930, Cys-955, Cys-960, His-973, Cys-979, Cys-1008, Cys-1013, His-1026, and Cys-1032 each coordinate Zn(2+). Residues 1058–1132 (NGIENDEEIK…ANLSQSLIHS (75 aa)) are a coiled coil.

This sequence belongs to the MYT1 family. In terms of assembly, interacts with SIN3B. In terms of tissue distribution, brain.

Its subcellular location is the nucleus. It is found in the chromosome. Functionally, transcription factor that plays a key role in neuronal differentiation by specifically repressing expression of non-neuronal genes during neuron differentiation. In contrast to other transcription repressors that inhibit specific lineages, mediates repression of multiple differentiation programs. Also represses expression of negative regulators of neurogenesis, such as members of the Notch signaling pathway, including HES1. The combination of three transcription factors, ASCL1, POU3F2/BRN2 and MYT1L, is sufficient to reprogram fibroblasts and other somatic cells into induced neuronal (iN) cells in vitro. Directly binds the 5'-AAGTT-3' core motif present on the promoter of target genes and represses transcription by recruiting a multiprotein complex containing SIN3B. The 5'-AAGTT-3' core motif is absent from the promoter of neural genes. This chain is Myelin transcription factor 1-like protein, found in Mus musculus (Mouse).